Consider the following 484-residue polypeptide: Ribosomal protein uS12 methylthiotransferase RimO (484 aa).

The MTTase N-terminal domain occupies 8 to 119; the sequence is RRVAMVTLGC…LAERLDDVLA (112 aa). 6 residues coordinate [4Fe-4S] cluster: Cys-17, Cys-53, Cys-82, Cys-184, Cys-188, and Cys-191. Residues 170–401 form the Radical SAM core domain; the sequence is LDDSPLAALK…ALADELVAQR (232 aa). Residues 403-469 enclose the TRAM domain; it reads EDRVGTEVRV…GVDLVVRPVG (67 aa).

The protein belongs to the methylthiotransferase family. RimO subfamily. It depends on [4Fe-4S] cluster as a cofactor.

The protein localises to the cytoplasm. The catalysed reaction is L-aspartate(89)-[ribosomal protein uS12]-hydrogen + (sulfur carrier)-SH + AH2 + 2 S-adenosyl-L-methionine = 3-methylsulfanyl-L-aspartate(89)-[ribosomal protein uS12]-hydrogen + (sulfur carrier)-H + 5'-deoxyadenosine + L-methionine + A + S-adenosyl-L-homocysteine + 2 H(+). Catalyzes the methylthiolation of an aspartic acid residue of ribosomal protein uS12. The protein is Ribosomal protein uS12 methylthiotransferase RimO of Saccharopolyspora erythraea (strain ATCC 11635 / DSM 40517 / JCM 4748 / NBRC 13426 / NCIMB 8594 / NRRL 2338).